Here is a 333-residue protein sequence, read N- to C-terminus: Ketol-acid reductoisomerase (NADP(+)) (333 aa).

Residues 2–182 (AELFYDDDAD…GGTRAGVIKT (181 aa)) enclose the KARI N-terminal Rossmann domain. NADP(+) contacts are provided by residues 25–28 (YGSQ), Ser-51, Ser-53, and 83–86 (DPIQ). His-108 is a catalytic residue. Residue Gly-134 coordinates NADP(+). In terms of domain architecture, KARI C-terminal knotted spans 183–328 (TFTEETETDL…RELRKLMSWV (146 aa)). Residues Asp-191, Glu-195, Glu-227, and Glu-231 each coordinate Mg(2+). Ser-252 serves as a coordination point for substrate.

It belongs to the ketol-acid reductoisomerase family. Mg(2+) is required as a cofactor.

It catalyses the reaction (2R)-2,3-dihydroxy-3-methylbutanoate + NADP(+) = (2S)-2-acetolactate + NADPH + H(+). The enzyme catalyses (2R,3R)-2,3-dihydroxy-3-methylpentanoate + NADP(+) = (S)-2-ethyl-2-hydroxy-3-oxobutanoate + NADPH + H(+). It participates in amino-acid biosynthesis; L-isoleucine biosynthesis; L-isoleucine from 2-oxobutanoate: step 2/4. The protein operates within amino-acid biosynthesis; L-valine biosynthesis; L-valine from pyruvate: step 2/4. In terms of biological role, involved in the biosynthesis of branched-chain amino acids (BCAA). Catalyzes an alkyl-migration followed by a ketol-acid reduction of (S)-2-acetolactate (S2AL) to yield (R)-2,3-dihydroxy-isovalerate. In the isomerase reaction, S2AL is rearranged via a Mg-dependent methyl migration to produce 3-hydroxy-3-methyl-2-ketobutyrate (HMKB). In the reductase reaction, this 2-ketoacid undergoes a metal-dependent reduction by NADPH to yield (R)-2,3-dihydroxy-isovalerate. The protein is Ketol-acid reductoisomerase (NADP(+)) of Streptomyces griseus subsp. griseus (strain JCM 4626 / CBS 651.72 / NBRC 13350 / KCC S-0626 / ISP 5235).